A 585-amino-acid polypeptide reads, in one-letter code: Lipoprotein LpqB (585 aa).

Positions 1 to 17 are cleaved as a signal peptide; it reads MGRKLLGLLMLAVLLAG. C18 carries the N-palmitoyl cysteine lipid modification. Residue C18 is the site of S-diacylglycerol cysteine attachment. 2 disordered regions span residues 24–46 and 560–585; these read SSAP…KPTP and PSAD…VLPG.

It belongs to the LpqB lipoprotein family.

It is found in the cell membrane. The sequence is that of Lipoprotein LpqB from Mycobacterium paratuberculosis.